An 803-amino-acid chain; its full sequence is H(+)/Cl(-) exchange transporter 7 (803 aa).

The disordered stretch occupies residues 1–46 (MANVSKKVSWSGRDRDDEEGAPLLRRTGQPDEETPLLNGAGPGARQ). At 1-124 (MANVSKKVSW…TAFRTVEIKR (124 aa)) the chain is on the cytoplasmic side. At S9 the chain carries Phosphoserine. The next 2 helical transmembrane spans lie at 125–157 (WVIC…YRVI) and 172–195 (FSLL…VAFI). The Selectivity filter part_1 motif lies at 201–205 (GSGIP). S202 provides a ligand contact to chloride. Residues 204–211 (IPQIKCFL) constitute an intramembrane region (helical). The next 2 helical transmembrane spans lie at 221–239 (RLKT…VVGG) and 245–262 (EGPM…ISQG). Residues 243–247 (GKEGP) carry the Selectivity filter part_2 motif. 2 consecutive intramembrane regions (helical) follow at residues 286–298 (FVSA…VSAA) and 302–310 (PVGGVLFSL). 5 consecutive transmembrane segments (helical) span residues 320-339 (FLTW…LNFV), 373-403 (IPVF…FRIR), 408-430 (PCLQ…FVLI), 485-505 (PMTL…TYGL), and 510-533 (GVFI…LSYL). The short motif at 510–514 (GVFIP) is the Selectivity filter part_3 element. F512 serves as a coordination point for chloride. The segment at residues 543 to 557 (GKYALMGAAAQLGGI) is an intramembrane region (helical). The note=Loop between two helices intramembrane region spans 558 to 560 (VRM). An intramembrane region (helical) is located at residues 561–572 (TLSLTVIMMEAT). Positions 573–576 (SNVT) form an intramembrane region, note=Loop between two helices. The helical transmembrane segment at 577–595 (YGFPIMLVLMTAKIVGDVF) threads the bilayer. Topologically, residues 596-803 (IEGLYDMHIQ…GLEELSLAQT (208 aa)) are cytoplasmic. Y600 is a chloride binding site. CBS domains are found at residues 629-693 (MSTP…VFVE) and 739-797 (MNPS…GLEE). ATP-binding positions include 656-658 (HNG) and 781-784 (TRKD). Position 799 is a phosphoserine (S799).

This sequence belongs to the chloride channel (TC 2.A.49) family. ClC-7/CLCN7 subfamily. As to quaternary structure, chloride channel 7 are heteromers of alpha (CLCN7) and beta (OSTM1) subunits. In terms of tissue distribution, liver, spleen, kidneys and brain.

It localises to the lysosome membrane. It carries out the reaction 2 chloride(in) + H(+)(out) = 2 chloride(out) + H(+)(in). Its function is as follows. Slowly voltage-gated channel mediating the exchange of chloride ions against protons. Functions as antiporter and contributes to the acidification of the lysosome lumen and may be involved in maintaining lysosomal pH. The CLC channel family contains both chloride channels and proton-coupled anion transporters that exchange chloride or another anion for protons. The presence of conserved gating glutamate residues is typical for family members that function as antiporters. In Mus musculus (Mouse), this protein is H(+)/Cl(-) exchange transporter 7.